Reading from the N-terminus, the 437-residue chain is GTPase Der (437 aa).

2 EngA-type G domains span residues 4–167 (PVVA…AEKD) and 175–352 (IRFS…DHQH). Residues 10 to 17 (GRPNVGKS), 57 to 61 (DTGGI), 119 to 122 (NKVD), 181 to 188 (GRPNVGKS), 229 to 233 (DTAGI), and 294 to 297 (NKWD) contribute to the GTP site. In terms of domain architecture, KH-like spans 353–437 (RRIQSAVLND…PIRLIKRRRK (85 aa)).

This sequence belongs to the TRAFAC class TrmE-Era-EngA-EngB-Septin-like GTPase superfamily. EngA (Der) GTPase family. Associates with the 50S ribosomal subunit.

Its function is as follows. GTPase that plays an essential role in the late steps of ribosome biogenesis. This Limosilactobacillus fermentum (strain NBRC 3956 / LMG 18251) (Lactobacillus fermentum) protein is GTPase Der.